The chain runs to 449 residues: Bifunctional protein GlmU (449 aa).

The tract at residues 1–226 (MVIVAVLAAG…YEEILGVNDR (226 aa)) is pyrophosphorylase. UDP-N-acetyl-alpha-D-glucosamine-binding positions include 7 to 10 (LAAG), Lys21, Gln73, and 78 to 79 (GT). Asp103 is a Mg(2+) binding site. The UDP-N-acetyl-alpha-D-glucosamine site is built by Gly140, Glu155, Asn170, and Asn224. Asn224 is a binding site for Mg(2+). Positions 227 to 247 (VQLAAAYQVLQNRIKKAWMQA) are linker. The interval 248-449 (GVTLIDPASI…VVKPNWEPEA (202 aa)) is N-acetyltransferase. Positions 329 and 347 each coordinate UDP-N-acetyl-alpha-D-glucosamine. His359 functions as the Proton acceptor in the catalytic mechanism. UDP-N-acetyl-alpha-D-glucosamine is bound by residues Tyr362 and Asn373. Acetyl-CoA contacts are provided by residues Ala376, 382–383 (NY), Ala419, and Arg436.

The protein in the N-terminal section; belongs to the N-acetylglucosamine-1-phosphate uridyltransferase family. This sequence in the C-terminal section; belongs to the transferase hexapeptide repeat family. As to quaternary structure, homotrimer. The cofactor is Mg(2+).

Its subcellular location is the cytoplasm. It carries out the reaction alpha-D-glucosamine 1-phosphate + acetyl-CoA = N-acetyl-alpha-D-glucosamine 1-phosphate + CoA + H(+). The enzyme catalyses N-acetyl-alpha-D-glucosamine 1-phosphate + UTP + H(+) = UDP-N-acetyl-alpha-D-glucosamine + diphosphate. It functions in the pathway nucleotide-sugar biosynthesis; UDP-N-acetyl-alpha-D-glucosamine biosynthesis; N-acetyl-alpha-D-glucosamine 1-phosphate from alpha-D-glucosamine 6-phosphate (route II): step 2/2. The protein operates within nucleotide-sugar biosynthesis; UDP-N-acetyl-alpha-D-glucosamine biosynthesis; UDP-N-acetyl-alpha-D-glucosamine from N-acetyl-alpha-D-glucosamine 1-phosphate: step 1/1. It participates in bacterial outer membrane biogenesis; LPS lipid A biosynthesis. In terms of biological role, catalyzes the last two sequential reactions in the de novo biosynthetic pathway for UDP-N-acetylglucosamine (UDP-GlcNAc). The C-terminal domain catalyzes the transfer of acetyl group from acetyl coenzyme A to glucosamine-1-phosphate (GlcN-1-P) to produce N-acetylglucosamine-1-phosphate (GlcNAc-1-P), which is converted into UDP-GlcNAc by the transfer of uridine 5-monophosphate (from uridine 5-triphosphate), a reaction catalyzed by the N-terminal domain. This chain is Bifunctional protein GlmU, found in Thermosynechococcus vestitus (strain NIES-2133 / IAM M-273 / BP-1).